The following is a 188-amino-acid chain: UPF0301 protein Smlt1098 (188 aa).

It belongs to the UPF0301 (AlgH) family.

The sequence is that of UPF0301 protein Smlt1098 from Stenotrophomonas maltophilia (strain K279a).